The following is a 272-amino-acid chain: Shikimate dehydrogenase (NADP(+)) (272 aa).

Residues 14 to 16 (SKS) and threonine 61 each bind shikimate. The Proton acceptor role is filled by lysine 65. Residues asparagine 86 and aspartate 102 each contribute to the shikimate site. Residues 126-130 (GAGGA), 149-154 (NRTFSK), serine 189, and methionine 213 contribute to the NADP(+) site. Residue tyrosine 215 coordinates shikimate. Glycine 238 lines the NADP(+) pocket.

Belongs to the shikimate dehydrogenase family. As to quaternary structure, homodimer.

It catalyses the reaction shikimate + NADP(+) = 3-dehydroshikimate + NADPH + H(+). Its pathway is metabolic intermediate biosynthesis; chorismate biosynthesis; chorismate from D-erythrose 4-phosphate and phosphoenolpyruvate: step 4/7. Its function is as follows. Involved in the biosynthesis of the chorismate, which leads to the biosynthesis of aromatic amino acids. Catalyzes the reversible NADPH linked reduction of 3-dehydroshikimate (DHSA) to yield shikimate (SA). This chain is Shikimate dehydrogenase (NADP(+)), found in Haemophilus influenzae (strain ATCC 51907 / DSM 11121 / KW20 / Rd).